The sequence spans 278 residues: Release factor glutamine methyltransferase (278 aa).

S-adenosyl-L-methionine-binding positions include 116–120 (GTGTG), D139, W168, and N182. Residue 182–185 (NPPY) coordinates substrate.

This sequence belongs to the protein N5-glutamine methyltransferase family. PrmC subfamily.

It carries out the reaction L-glutaminyl-[peptide chain release factor] + S-adenosyl-L-methionine = N(5)-methyl-L-glutaminyl-[peptide chain release factor] + S-adenosyl-L-homocysteine + H(+). In terms of biological role, methylates the class 1 translation termination release factors RF1/PrfA and RF2/PrfB on the glutamine residue of the universally conserved GGQ motif. The polypeptide is Release factor glutamine methyltransferase (Cereibacter sphaeroides (strain ATCC 17023 / DSM 158 / JCM 6121 / CCUG 31486 / LMG 2827 / NBRC 12203 / NCIMB 8253 / ATH 2.4.1.) (Rhodobacter sphaeroides)).